Here is a 394-residue protein sequence, read N- to C-terminus: MNKKTIRDVEVRGKRVFCRVDFNVPMEQGAITDDTRIRAALPTIRYLIEHGAKVILASHLGRPKGKVVEELRLDAVAKRLGELLERPVAKTNEAVGDEVKAAVDRLNEGDVLLLENVRFYPGEEKNDPELAKAFAELADLYVNDAFGAAHRAHASTEGIAHYLPAVAGFLMEKELEVLGKALSNPDRPFTAIIGGAKVKDKIGVIDNLLEKVDNLIIGGGLAYTFVKALGHDVGKSLLEEDKIELAKSFMEKAKEKGVRFYMPVDVVVADRFANDANTKVVAIDAIPSDWEALDIGPKTRELYRDVIRQSKLVVWNGPMGVFEMEAFAHGTKAIAEALAEAPDTYSVIGGGDSAAAVEKFGLADKMDHISTGGGASLEFMEGKQLPGVVALEDK.

Residues 21 to 23 (DFN), Arg36, 59 to 62 (HLGR), Arg118, and Arg151 each bind substrate. A Phosphoserine modification is found at Ser183. Lys201 is a binding site for ATP. Residue Thr299 is modified to Phosphothreonine. ATP is bound by residues Glu323 and 350–353 (GGDS).

The protein belongs to the phosphoglycerate kinase family. In terms of assembly, monomer.

Its subcellular location is the cytoplasm. The enzyme catalyses (2R)-3-phosphoglycerate + ATP = (2R)-3-phospho-glyceroyl phosphate + ADP. Its pathway is carbohydrate degradation; glycolysis; pyruvate from D-glyceraldehyde 3-phosphate: step 2/5. In Geobacillus kaustophilus (strain HTA426), this protein is Phosphoglycerate kinase.